Reading from the N-terminus, the 442-residue chain is ATP-dependent protease ATPase subunit HslU (442 aa).

ATP-binding positions include Ile18 and 60 to 65; that span reads GVGKTE. A disordered region spans residues 136–157; it reads LPKPKNDWESTETDSSSNTRQV. Positions 255, 320, and 392 each coordinate ATP.

Belongs to the ClpX chaperone family. HslU subfamily. A double ring-shaped homohexamer of HslV is capped on each side by a ring-shaped HslU homohexamer. The assembly of the HslU/HslV complex is dependent on binding of ATP.

The protein resides in the cytoplasm. Its function is as follows. ATPase subunit of a proteasome-like degradation complex; this subunit has chaperone activity. The binding of ATP and its subsequent hydrolysis by HslU are essential for unfolding of protein substrates subsequently hydrolyzed by HslV. HslU recognizes the N-terminal part of its protein substrates and unfolds these before they are guided to HslV for hydrolysis. The chain is ATP-dependent protease ATPase subunit HslU from Shewanella baltica (strain OS185).